The primary structure comprises 199 residues: Imidazoleglycerol-phosphate dehydratase (199 aa).

It belongs to the imidazoleglycerol-phosphate dehydratase family.

It localises to the cytoplasm. It carries out the reaction D-erythro-1-(imidazol-4-yl)glycerol 3-phosphate = 3-(imidazol-4-yl)-2-oxopropyl phosphate + H2O. It functions in the pathway amino-acid biosynthesis; L-histidine biosynthesis; L-histidine from 5-phospho-alpha-D-ribose 1-diphosphate: step 6/9. The chain is Imidazoleglycerol-phosphate dehydratase from Desulfotalea psychrophila (strain LSv54 / DSM 12343).